Here is a 105-residue protein sequence, read N- to C-terminus: MMGGNMSKMMKQVQKMQQDMLRLQEELGNRTVESTAGGGAVKVVANGRNEIVSIEIKPEALDPEDVEMLQDMILAAVNEALKKAQDMISQEMGRLTGNLKIPGLF.

The protein belongs to the YbaB/EbfC family. In terms of assembly, homodimer.

The protein localises to the cytoplasm. It is found in the nucleoid. Functionally, binds to DNA and alters its conformation. May be involved in regulation of gene expression, nucleoid organization and DNA protection. This is Nucleoid-associated protein PTH_0052 from Pelotomaculum thermopropionicum (strain DSM 13744 / JCM 10971 / SI).